The primary structure comprises 582 residues: Protein alan shepard (582 aa).

Pro residues predominate over residues Met-1–Gln-12. The interval Met-1–Phe-73 is disordered. Tyr-5 is modified (phosphotyrosine). Low complexity predominate over residues Gln-13–Gln-24. Positions Gln-25–Arg-36 are enriched in gly residues. Positions Ser-39–Gly-57 are enriched in polar residues. Residues Ser-58–Ala-72 show a composition bias toward low complexity. Tyr-125 and Tyr-142 each carry phosphotyrosine. Residues Pro-164 to Gly-225 are disordered. The span at Ser-178–Gly-225 shows a compositional bias: low complexity. 2 consecutive RRM domains span residues Thr-231–Gln-304 and Thr-310–Gly-389. The disordered stretch occupies residues Pro-555–Lys-582.

Has a role in the perception of gravity. The chain is Protein alan shepard from Drosophila yakuba (Fruit fly).